The primary structure comprises 212 residues: Putative tyrosine-protein phosphatase OCA1 (212 aa).

Positions 1-27 (MSNKDTSILKGNVDHEEADSNPKLRKI) are disordered. Positions 12 to 22 (NVDHEEADSNP) are enriched in basic and acidic residues. The Tyrosine-protein phosphatase domain maps to 40-208 (NFCPVERQLY…SVEIDPSKVP (169 aa)). Residue cysteine 146 is the Phosphocysteine intermediate of the active site.

The protein belongs to the protein-tyrosine phosphatase family.

It is found in the cytoplasm. The catalysed reaction is O-phospho-L-tyrosyl-[protein] + H2O = L-tyrosyl-[protein] + phosphate. Functionally, putative tyrosine-protein phosphatase required for protection against superoxide stress. This Scheffersomyces stipitis (strain ATCC 58785 / CBS 6054 / NBRC 10063 / NRRL Y-11545) (Yeast) protein is Putative tyrosine-protein phosphatase OCA1 (OCA1).